The sequence spans 924 residues: Intercellular adhesion molecule 5 (924 aa).

An N-terminal signal peptide occupies residues 1-31; that stretch reads MPGPSPGLRRALLGLWAALGLGLFGLSAVSQ. Topologically, residues 32 to 835 are extracellular; it reads EPFWADLQPR…RITVRVAGPW (804 aa). Ig-like C2-type domains lie at 48–130, 135–235, 242–329, 337–402, 408–486, 491–568, 573–662, 666–739, and 746–830; these read GGSL…PLPP, GENF…RLAA, GSER…LLTL, GQMV…SAEL, PRLD…VTLT, PALD…VAVT, PRFE…VVSA, PEMD…RTVT, and PVVA…ITVR. Residue N54 is glycosylated (N-linked (GlcNAc...) (high mannose) asparagine). Cystine bridges form between C55–C99 and C59–C103. 2 N-linked (GlcNAc...) asparagine glycosylation sites follow: N74 and N137. C142 and C198 are disulfide-bonded. Phosphothreonine is present on residues T182 and T184. Residues N195 and N214 are each glycosylated (N-linked (GlcNAc...) asparagine). A disulfide bridge connects residues C249 and C302. Residues N303, N316, N371, and N397 are each glycosylated (N-linked (GlcNAc...) asparagine). Cysteines 344 and 383 form a disulfide. Intrachain disulfides connect C415–C470, C498–C552, and C580–C645. Residues N583 and N646 are each glycosylated (N-linked (GlcNAc...) asparagine). C673 and C725 are disulfide-bonded. N-linked (GlcNAc...) asparagine glycosylation is found at N764, N795, and N796. C769 and C814 form a disulfide bridge. Residues 836–856 form a helical membrane-spanning segment; sequence LWVAVGGAAGGAALLAAGAGL. Residues 857–924 lie on the Cytoplasmic side of the membrane; sequence AFYVQSTACK…EVFAIQLTSA (68 aa). Over residues 891-903 the composition is skewed to gly residues; the sequence is AGGAAGAEGGPEA. The interval 891-911 is disordered; it reads AGGAAGAEGGPEAAGGAAESP.

This sequence belongs to the immunoglobulin superfamily. ICAM family. In terms of processing, glycosylation at Asn-54 is critical for functional folding. Expressed on neurons in the most rostral segment of the mammalian brain, the telencephalon.

The protein localises to the membrane. Its function is as follows. ICAM proteins are ligands for the leukocyte adhesion protein LFA-1 (integrin alpha-L/beta-2). The chain is Intercellular adhesion molecule 5 (ICAM5) from Homo sapiens (Human).